The primary structure comprises 244 residues: ATP synthase subunit 4, mitochondrial (244 aa).

The N-terminal 35 residues, 1–35, are a transit peptide targeting the mitochondrion; the sequence is MSMSMGVRGLALRSVSKTLFSQGVRCPSMVIGARY. S144 carries the post-translational modification Phosphoserine.

Belongs to the eukaryotic ATPase B chain family. As to quaternary structure, F-type ATPases have 2 components, CF(1) - the catalytic core - and CF(0) - the membrane proton channel. In yeast, the dimeric form of ATP synthase consists of 17 polypeptides: alpha, beta, gamma, delta, epsilon, 4 (B), 5 (OSCP), 6 (A), 8, 9 (C), d, E (Tim11), f, g, h, i/j and k.

The protein localises to the mitochondrion. It is found in the mitochondrion inner membrane. Mitochondrial membrane ATP synthase (F(1)F(0) ATP synthase or Complex V) produces ATP from ADP in the presence of a proton gradient across the membrane which is generated by electron transport complexes of the respiratory chain. F-type ATPases consist of two structural domains, F(1) - containing the extramembraneous catalytic core, and F(0) - containing the membrane proton channel, linked together by a central stalk and a peripheral stalk. During catalysis, ATP synthesis in the catalytic domain of F(1) is coupled via a rotary mechanism of the central stalk subunits to proton translocation. Part of the complex F(0) domain and the peripheric stalk, which acts as a stator to hold the catalytic alpha(3)beta(3) subcomplex and subunit a/ATP6 static relative to the rotary elements. The protein is ATP synthase subunit 4, mitochondrial (ATP4) of Saccharomyces cerevisiae (strain ATCC 204508 / S288c) (Baker's yeast).